A 352-amino-acid chain; its full sequence is Protein CIA1 (352 aa).

WD repeat units lie at residues 18–64 (GHTD…RSWT), 72–111 (THTRTVRSCAWSPSGQLLATASFDGTTGIWKNYGSEFECI), 116–155 (GHENEVKSVSWNASGSCLATCSRDKSVWIWEVLEGNEYDC), 161–200 (GHTQDVKMVQWHPTMDVLFSCSYDNTIKVWWSEDDDGEYQ), 211–250 (GHSSTVWSISFNAAGDKMVTCSDDLTLKIWGTDIAKMQSG), 265–303 (YHDRTIYSAHWSRDDIIASGAGDNAIRLFVDSKHDSVDG), and 315–352 (AHENDVNSVQWSPGEGNRLLASASDDGMVKIWQLATKP).

The protein belongs to the WD repeat CIA1 family. In terms of assembly, part of a complex composed of AE7, CIA1, MMS19 and NAR1. Interacts with AE7 and NAR1.

The protein resides in the nucleus. The protein localises to the cytoplasm. Its function is as follows. Essential component of the cytosolic iron-sulfur (Fe-S) protein assembly (CIA) machinery. Required for the maturation of extramitochondrial Fe/S proteins. The polypeptide is Protein CIA1 (Arabidopsis thaliana (Mouse-ear cress)).